We begin with the raw amino-acid sequence, 524 residues long: Cytochrome P450 monooxygenase oblB (524 aa).

3 helical membrane passes run 18–38 (ILNAGIAIAGLSAAYAIGLVI), 225–245 (FHSGVVTLPLFMGLPWLIHLI), and 322–342 (VLIGSGTMTTAGTMCFLVYYI). C466 lines the heme pocket.

The protein belongs to the cytochrome P450 family. Heme serves as cofactor.

Its subcellular location is the membrane. It carries out the reaction ophiobolin F + 4 reduced [NADPH--hemoprotein reductase] + 4 O2 = ophiobolin C + 4 oxidized [NADPH--hemoprotein reductase] + 6 H2O + 4 H(+). It participates in secondary metabolite biosynthesis; terpenoid biosynthesis. In terms of biological role, cytochrome P450 monooxygenase; part of the gene cluster that mediates the biosynthesis of the sesterterpenes ophiobolins, fungal phytotoxins with potential anti-cancer activities. The first step of the pathway is performed by the sesterterpene synthase oblA that possesses both prenyl transferase and terpene cyclase activity, converting isopentenyl diphosphate and dimethylallyl diphosphate into geranylfarnesyl diphosphate (GFPP) and further converting GFPP into ophiobolin F, respectively. Other sesterterpenoids (C(25) terpenoids) are found as minor products of oblA. The cytochrome P450 monooxygenase oblB then catalyzes a four-step oxidative transformation of ophiobolin F to yield ophiobolin C. The FAD-dependent oxidoreductase oblC might be involved in a later oxidation step that produces ophiobolin A. The chain is Cytochrome P450 monooxygenase oblB from Cochliobolus heterostrophus (strain C5 / ATCC 48332 / race O) (Southern corn leaf blight fungus).